The sequence spans 609 residues: Beta-(1--&gt;2)glucan export ATP-binding/permease protein NdvA (609 aa).

In terms of domain architecture, ABC transmembrane type-1 spans 21 to 311 (GWILAGANLL…VVSFINSVFM (291 aa)). The next 6 helical transmembrane spans lie at 22-42 (WILA…PVLF), 68-88 (LLAV…TVAL), 146-166 (EHFA…YINW), 167-187 (RLAI…TLVV), 248-268 (WWAV…LAIF), and 285-305 (IVMF…VVSF). The ABC transporter domain maps to 345–579 (VEFNDVSFSY…GGHFAQLAKA (235 aa)). 378 to 385 (GPTGAGKS) contributes to the ATP binding site.

It belongs to the ABC transporter superfamily. Beta-(1--&gt;2)glucan exporter (TC 3.A.1.108.1) family. Homodimer.

It localises to the cell inner membrane. It carries out the reaction [(1-&gt;2)-beta-D-glucosyl](n)(in) + ATP + H2O = [(1-&gt;2)-beta-D-glucosyl](n)(out) + ADP + phosphate + H(+). In terms of biological role, involved in beta-(1--&gt;2)glucan export. Transmembrane domains (TMD) form a pore in the inner membrane and the ATP-binding domain (NBD) is responsible for energy generation. The protein is Beta-(1--&gt;2)glucan export ATP-binding/permease protein NdvA of Nitrobacter winogradskyi (strain ATCC 25391 / DSM 10237 / CIP 104748 / NCIMB 11846 / Nb-255).